The chain runs to 218 residues: Putative glutamine transport system permease protein GlnP (218 aa).

In terms of domain architecture, ABC transmembrane type-1 spans 19 to 208 (TLVTLKYSII…ILVMLISFIA (190 aa)). The next 4 membrane-spanning stretches (helical) occupy residues 25–45 (YSII…ICKV), 57–79 (FYTS…FAAP), 86–108 (FSVF…SEVI), and 187–207 (FFPM…ISFI).

The protein belongs to the binding-protein-dependent transport system permease family. HisMQ subfamily.

The protein localises to the cell inner membrane. Functionally, part of the binding-protein-dependent transport system for glutamine; probably responsible for the translocation of the substrate across the membrane. The protein is Putative glutamine transport system permease protein GlnP (glnP) of Rickettsia typhi (strain ATCC VR-144 / Wilmington).